The sequence spans 225 residues: NAD(P)H-quinone oxidoreductase subunit K, chloroplastic (225 aa).

Cys-43, Cys-44, Cys-108, and Cys-139 together coordinate [4Fe-4S] cluster.

The protein belongs to the complex I 20 kDa subunit family. As to quaternary structure, NDH is composed of at least 16 different subunits, 5 of which are encoded in the nucleus. [4Fe-4S] cluster is required as a cofactor.

It localises to the plastid. Its subcellular location is the chloroplast thylakoid membrane. The enzyme catalyses a plastoquinone + NADH + (n+1) H(+)(in) = a plastoquinol + NAD(+) + n H(+)(out). It catalyses the reaction a plastoquinone + NADPH + (n+1) H(+)(in) = a plastoquinol + NADP(+) + n H(+)(out). NDH shuttles electrons from NAD(P)H:plastoquinone, via FMN and iron-sulfur (Fe-S) centers, to quinones in the photosynthetic chain and possibly in a chloroplast respiratory chain. The immediate electron acceptor for the enzyme in this species is believed to be plastoquinone. Couples the redox reaction to proton translocation, and thus conserves the redox energy in a proton gradient. In Hordeum vulgare (Barley), this protein is NAD(P)H-quinone oxidoreductase subunit K, chloroplastic.